Consider the following 500-residue polypeptide: Proline--tRNA ligase (500 aa).

This sequence belongs to the class-II aminoacyl-tRNA synthetase family. ProS type 3 subfamily. As to quaternary structure, homodimer.

The protein resides in the cytoplasm. The catalysed reaction is tRNA(Pro) + L-proline + ATP = L-prolyl-tRNA(Pro) + AMP + diphosphate. Its function is as follows. Catalyzes the attachment of proline to tRNA(Pro) in a two-step reaction: proline is first activated by ATP to form Pro-AMP and then transferred to the acceptor end of tRNA(Pro). The polypeptide is Proline--tRNA ligase (Paramagnetospirillum magneticum (strain ATCC 700264 / AMB-1) (Magnetospirillum magneticum)).